Reading from the N-terminus, the 142-residue chain is Hemoglobin subunit alpha (142 aa).

The region spanning 2-142 is the Globin domain; that stretch reads VLSPADKTNV…VSTVLTSKYR (141 aa). Position 4 is a phosphoserine (Ser4). At Lys8 the chain carries N6-succinyllysine. Position 9 is a phosphothreonine (Thr9). At Lys12 the chain carries N6-succinyllysine. Lys17 carries the N6-acetyllysine; alternate modification. Lys17 is modified (N6-succinyllysine; alternate). Phosphotyrosine is present on Tyr25. Ser36 carries the post-translational modification Phosphoserine. Residue Lys41 is modified to N6-succinyllysine. Ser50 carries the post-translational modification Phosphoserine. His59 provides a ligand contact to O2. His88 is a heme b binding site. A Phosphoserine modification is found at Ser103. Thr109 carries the phosphothreonine modification. Position 125 is a phosphoserine (Ser125). Thr135 and Thr138 each carry phosphothreonine. Ser139 bears the Phosphoserine mark.

It belongs to the globin family. In terms of assembly, heterotetramer of two alpha chains and two beta chains. As to expression, red blood cells.

Functionally, involved in oxygen transport from the lung to the various peripheral tissues. In terms of biological role, hemopressin acts as an antagonist peptide of the cannabinoid receptor CNR1. Hemopressin-binding efficiently blocks cannabinoid receptor CNR1 and subsequent signaling. The polypeptide is Hemoglobin subunit alpha (HBA) (Ailuropoda melanoleuca (Giant panda)).